The following is a 267-amino-acid chain: Coiled-coil domain-containing protein 90B, mitochondrial (267 aa).

Residues 1–47 constitute a mitochondrion transit peptide; it reads MKGSQLYRHLSLQGNRLHLHLFQGKKLQLHPSQGHKGTAHRTWKKGF. Positions 142 to 175 form a coiled coil; the sequence is LEKSEFATLRAENEKMKIELEHVRQHLLNETNRI. A helical membrane pass occupies residues 244-266; the sequence is TVRYMAASVFTCLAIALGFYRLW.

Belongs to the CCDC90 family.

The protein resides in the mitochondrion membrane. The protein is Coiled-coil domain-containing protein 90B, mitochondrial (ccdc90b) of Xenopus tropicalis (Western clawed frog).